Consider the following 803-residue polypeptide: Phenylalanine--tRNA ligase beta subunit (803 aa).

One can recognise a tRNA-binding domain in the interval 39 to 152; sequence TPGFQKVVAG…PDASPGADAA (114 aa). Residues 406-480 enclose the B5 domain; that stretch reads RQPVTIELRP…RLYGYNRIPV (75 aa). Mg(2+)-binding residues include D458, D464, E467, and E468. The FDX-ACB domain maps to 709–802; the sequence is PRFPAVERDL…LEERLGASLR (94 aa).

Belongs to the phenylalanyl-tRNA synthetase beta subunit family. Type 1 subfamily. As to quaternary structure, tetramer of two alpha and two beta subunits. Mg(2+) serves as cofactor.

The protein localises to the cytoplasm. It catalyses the reaction tRNA(Phe) + L-phenylalanine + ATP = L-phenylalanyl-tRNA(Phe) + AMP + diphosphate + H(+). In Moorella thermoacetica (strain ATCC 39073 / JCM 9320), this protein is Phenylalanine--tRNA ligase beta subunit.